Here is a 158-residue protein sequence, read N- to C-terminus: 3-hydroxyacyl-[acyl-carrier-protein] dehydratase FabZ (158 aa).

Histidine 62 is a catalytic residue.

This sequence belongs to the thioester dehydratase family. FabZ subfamily.

The protein resides in the cytoplasm. The catalysed reaction is a (3R)-hydroxyacyl-[ACP] = a (2E)-enoyl-[ACP] + H2O. Involved in unsaturated fatty acids biosynthesis. Catalyzes the dehydration of short chain beta-hydroxyacyl-ACPs and long chain saturated and unsaturated beta-hydroxyacyl-ACPs. The protein is 3-hydroxyacyl-[acyl-carrier-protein] dehydratase FabZ of Novosphingobium aromaticivorans (strain ATCC 700278 / DSM 12444 / CCUG 56034 / CIP 105152 / NBRC 16084 / F199).